A 110-amino-acid polypeptide reads, in one-letter code: UPF0102 protein HH_1751 (110 aa).

This sequence belongs to the UPF0102 family.

In Helicobacter hepaticus (strain ATCC 51449 / 3B1), this protein is UPF0102 protein HH_1751.